The following is a 221-amino-acid chain: Placenta growth factor (221 aa).

Residues 1–18 (MPVMRLFPCFLQLLAGLA) form the signal peptide. Asparagine 33 is a glycosylation site (N-linked (GlcNAc...) asparagine). 3 disulfide bridges follow: cysteine 52–cysteine 94, cysteine 83–cysteine 128, and cysteine 87–cysteine 130. Asparagine 101 carries N-linked (GlcNAc...) asparagine glycosylation. A disordered region spans residues 175 to 221 (QSAVWPSSPVPEEIPRMHPGRNGKKQQRKPLREKMKPERCGDAVPRR). Positions 192-203 (HPGRNGKKQQRK) are enriched in basic residues. The segment at 193–213 (PGRNGKKQQRKPLREKMKPER) is heparin-binding. The span at 204 to 221 (PLREKMKPERCGDAVPRR) shows a compositional bias: basic and acidic residues.

This sequence belongs to the PDGF/VEGF growth factor family. In terms of assembly, antiparallel homodimer; disulfide-linked. Also found as heterodimer with VEGFA/VEGF. Isoform PlGF-3 is found both as homodimer and as monomer. In terms of processing, N-glycosylated. As to expression, while the three isoforms are present in most placental tissues, PlGF-2 is specific to early (8 week) placenta and only PlGF-1 is found in the colon and mammary carcinomas.

It localises to the secreted. Growth factor active in angiogenesis and endothelial cell growth, stimulating their proliferation and migration. It binds to the receptor FLT1/VEGFR-1. Isoform PlGF-2 binds NRP1/neuropilin-1 and NRP2/neuropilin-2 in a heparin-dependent manner. Also promotes cell tumor growth. The sequence is that of Placenta growth factor (PGF) from Homo sapiens (Human).